The following is a 403-amino-acid chain: Keratin, type I cytoskeletal 19 (403 aa).

The tract at residues 1–82 is head; that stretch reads MTSYSYRQSS…TVTDGLLGGN (82 aa). At Arg7 the chain carries Omega-N-methylarginine. A Phosphoserine modification is found at Ser14. At Arg24 the chain carries Asymmetric dimethylarginine; alternate. The residue at position 24 (Arg24) is an Omega-N-methylarginine; alternate. Phosphoserine is present on Ser27. Arg32 is modified (omega-N-methylarginine). A phosphoserine mark is found at Ser35 and Ser40. 2 positions are modified to omega-N-methylarginine: Arg43 and Arg51. Residues Ser57 and Ser67 each carry the phosphoserine modification. The segment at 83-118 is coil 1A; the sequence is EKITMQNLNDRLASYLDKVRALEQANGELEVKIRDW. An IF rod domain is found at 83–394; it reads EKITMQNLND…SLLEGQEAHY (312 aa). The segment at 119–136 is linker 1; it reads YQKQGPGPFRDYSQYFKT. A coil 1B region spans residues 137 to 228; that stretch reads IEDLRDKILG…KNHEEEISAL (92 aa). The tract at residues 229–251 is linker 12; it reads RSQVGGQVSVEVDSTPGIDLAKI. The interval 247–393 is necessary for interaction with PNN; that stretch reads DLAKILSEMR…RSLLEGQEAH (147 aa). A coil 2 region spans residues 252-390; it reads LSEMRSQYEA…ATYRSLLEGQ (139 aa). A Phosphothreonine modification is found at Thr326. Positions 391 to 403 are rod-like helical tail; the sequence is EAHYNSLSIAKAL. Tyr394 is subject to Phosphotyrosine. Ser398 is subject to Phosphoserine.

It belongs to the intermediate filament family. Heterotetramer of two type I and two type II keratins. Interacts with PNN. Interacts with the actin-binding domain of DMD. As to expression, expressed in brain, heart, skin and in costameres of myoplasm at the sarcolemmal membrane in skeletal and cardiac muscle fibers. Undifferentiated gonads and somatic cells of ovarian cords throughout the fetal ovary development.

In terms of biological role, involved in the organization of myofibers. Together with KRT8, helps to link the contractile apparatus to dystrophin at the costameres of striated muscle. This is Keratin, type I cytoskeletal 19 (Krt19) from Rattus norvegicus (Rat).